A 160-amino-acid polypeptide reads, in one-letter code: Transcription elongation factor GreA (160 aa).

A coiled-coil region spans residues 49–73 (HAAKEEQSHNEGRIADLEDKLARAD).

Belongs to the GreA/GreB family.

Its function is as follows. Necessary for efficient RNA polymerase transcription elongation past template-encoded arresting sites. The arresting sites in DNA have the property of trapping a certain fraction of elongating RNA polymerases that pass through, resulting in locked ternary complexes. Cleavage of the nascent transcript by cleavage factors such as GreA or GreB allows the resumption of elongation from the new 3'terminus. GreA releases sequences of 2 to 3 nucleotides. This chain is Transcription elongation factor GreA, found in Rhodopseudomonas palustris (strain BisA53).